Consider the following 652-residue polypeptide: Phosphomethylpyrimidine synthase (652 aa).

2 disordered regions span residues 1 to 45 (MVSR…SVSA) and 118 to 166 (QRGD…LDGR). The span at 8 to 45 (SSSSTSKAVTSSPSTSSLSSAASSPSVSSSSSSSSVSA) shows a compositional bias: low complexity. The segment covering 134-162 (GASGPGTLGSGTPGSGTPGSGPLGLGGTD) has biased composition (gly residues). Substrate contacts are provided by residues Asn245, Met274, Tyr303, His339, 359-361 (SRG), 400-403 (DGLR), and Glu439. Residue His443 coordinates Zn(2+). Tyr466 lines the substrate pocket. His507 lines the Zn(2+) pocket. 3 residues coordinate [4Fe-4S] cluster: Cys587, Cys590, and Cys595.

The protein belongs to the ThiC family. [4Fe-4S] cluster serves as cofactor.

The enzyme catalyses 5-amino-1-(5-phospho-beta-D-ribosyl)imidazole + S-adenosyl-L-methionine = 4-amino-2-methyl-5-(phosphooxymethyl)pyrimidine + CO + 5'-deoxyadenosine + formate + L-methionine + 3 H(+). It participates in cofactor biosynthesis; thiamine diphosphate biosynthesis. Catalyzes the synthesis of the hydroxymethylpyrimidine phosphate (HMP-P) moiety of thiamine from aminoimidazole ribotide (AIR) in a radical S-adenosyl-L-methionine (SAM)-dependent reaction. In Frankia casuarinae (strain DSM 45818 / CECT 9043 / HFP020203 / CcI3), this protein is Phosphomethylpyrimidine synthase.